The sequence spans 49 residues: Large ribosomal subunit protein bL33B (49 aa).

This sequence belongs to the bacterial ribosomal protein bL33 family.

The sequence is that of Large ribosomal subunit protein bL33B (rpmGB) from Bacillus licheniformis.